We begin with the raw amino-acid sequence, 631 residues long: Methanol dehydrogenase [cytochrome c] subunit 1 (631 aa).

Residues 1 to 32 (MNRNTPKARGASSLAMAVAMGLAVLTTAPATA) form the signal peptide. A disulfide bridge links Cys-135 with Cys-136. Ca(2+) is bound by residues Glu-209 and Asn-293. The Proton acceptor role is filled by Asp-335. The cysteines at positions 418 and 447 are disulfide-linked.

The protein belongs to the bacterial PQQ dehydrogenase family. Heterotetramer composed of 2 alpha and 2 beta subunits. Requires pyrroloquinoline quinone as cofactor. It depends on Ca(2+) as a cofactor.

The protein localises to the periplasm. The catalysed reaction is 2 Fe(III)-[cytochrome cL] + a primary alcohol = 2 Fe(II)-[cytochrome cL] + an aldehyde + 2 H(+). Functionally, catalyzes the oxidation of primary alcohols including methanol. In Paracoccus denitrificans, this protein is Methanol dehydrogenase [cytochrome c] subunit 1 (moxF).